A 990-amino-acid chain; its full sequence is Tyrosine-protein phosphatase 3 (990 aa).

Disordered stretches follow at residues 47-88 (QSQS…SPSV), 100-193 (NKIN…SNIE), 246-414 (PNQQ…SFSQ), and 431-452 (KPEM…HNDL). 2 stretches are compositionally biased toward low complexity: residues 52–88 (NTNT…SPSV) and 100–117 (NKIN…NNNN). A compositionally biased stretch (polar residues) spans 127-136 (LKLSNTMIIK). Low complexity-rich tracts occupy residues 137-191 (NNNN…SNSN), 250-271 (SSSS…SSLL), 278-293 (NNST…NSSN), 310-327 (QAQV…QHQQ), and 334-413 (NLSS…TSFS). The region spanning 422-715 (MRLEFEMIKK…IFIFKVINDV (294 aa)) is the Tyrosine-protein phosphatase domain. Residues 437 to 447 (KKSHKHHQRHY) are compositionally biased toward basic residues. The Phosphocysteine intermediate role is filled by Cys-650. Over residues 786–795 (PPQQQQDNPF) the composition is skewed to polar residues. Disordered regions lie at residues 786-814 (PPQQ…NISI) and 834-990 (LQQQ…IKCF). Composition is skewed to low complexity over residues 796-806 (SKSSIKISPSP) and 834-850 (LQQQ…DNPP). A compositionally biased stretch (polar residues) spans 851–868 (LNMSSNSIKFPPVTSLSS). Low complexity-rich tracts occupy residues 878 to 916 (NDNN…DNNG) and 924 to 968 (GSFL…SDNN).

The protein belongs to the protein-tyrosine phosphatase family. Non-receptor class subfamily. As to expression, in the anterior-like and prestalk cell types.

The protein localises to the cytoplasm. The enzyme catalyses O-phospho-L-tyrosyl-[protein] + H2O = L-tyrosyl-[protein] + phosphate. Seems to dephosphorylate a protein of 130 kDa (p130). This Dictyostelium discoideum (Social amoeba) protein is Tyrosine-protein phosphatase 3 (ptpC).